The primary structure comprises 182 residues: MVFGKRYRDKETGIIYDENGRPCKTCNIFSSFRNVAQQPNSSTVPEVKSNTQLESKQSSIDCNTNAIPDSVSFPRLPDVAELGRSTWTFLHAMAANFPKNPTPTQQNDMSSFLYNFSKFYPCWSCAEDLRIWMAKYGNSPRVDSRESLCEWICEAHNDVNERLGKPLFNCQVWSKKASELAD.

Residues 75 to 177 (RLPDVAELGR…FNCQVWSKKA (103 aa)) enclose the ERV/ALR sulfhydryl oxidase domain. FAD contacts are provided by residues 81 to 87 (ELGRSTW), H91, and Y120. 2 disulfides stabilise this stretch: C122–C125 and C153–C170. Residues 153–165 (CEAHNDVNERLGK) and 176–177 (KA) contribute to the FAD site.

The cofactor is FAD.

Its subcellular location is the mitochondrion intermembrane space. It catalyses the reaction 2 R'C(R)SH + O2 = R'C(R)S-S(R)CR' + H2O2. In terms of biological role, FAD-dependent sulfhydryl oxidase that catalyzes disulfide bond formation. Required for the import and folding of small cysteine-containing proteins in the mitochondrial intermembrane space (IMS). This Schizosaccharomyces pombe (strain 972 / ATCC 24843) (Fission yeast) protein is Mitochondrial FAD-linked sulfhydryl oxidase erv1 (erv1).